The primary structure comprises 529 residues: GMP synthase [glutamine-hydrolyzing] (529 aa).

In terms of domain architecture, Glutamine amidotransferase type-1 spans 17–206 (TILVLDFGSQ…AIDICQASNN (190 aa)). The active-site Nucleophile is the C93. Residues H180 and E182 contribute to the active site. The GMPS ATP-PPase domain maps to 207 to 404 (WTMENFIDTE…MGVPHDLVWR (198 aa)). 235-241 (SGGVDST) contacts ATP. XMP-binding residues include R308, D466, K521, and E527.

Homodimer. The cofactor is Mg(2+).

The protein resides in the cytoplasm. The protein localises to the cytosol. The enzyme catalyses XMP + L-glutamine + ATP + H2O = GMP + L-glutamate + AMP + diphosphate + 2 H(+). It participates in purine metabolism; GMP biosynthesis; GMP from XMP (L-Gln route): step 1/1. Catalyzes the conversion of xanthine monophosphate (XMP) to GMP in the presence of glutamine and ATP through an adenyl-XMP intermediate. This Debaryomyces hansenii (strain ATCC 36239 / CBS 767 / BCRC 21394 / JCM 1990 / NBRC 0083 / IGC 2968) (Yeast) protein is GMP synthase [glutamine-hydrolyzing] (GUA1).